A 406-amino-acid polypeptide reads, in one-letter code: Cysteine desulfurase (406 aa).

Lysine 226 is subject to N6-(pyridoxal phosphate)lysine. Cysteine 364 serves as the catalytic Cysteine persulfide intermediate.

This sequence belongs to the class-V pyridoxal-phosphate-dependent aminotransferase family. Csd subfamily. In terms of assembly, homodimer. Interacts with SufE and the SufBCD complex composed of SufB, SufC and SufD. The interaction with SufE is required to mediate the direct transfer of the sulfur atom from the S-sulfanylcysteine. The cofactor is pyridoxal 5'-phosphate.

It is found in the cytoplasm. It catalyses the reaction (sulfur carrier)-H + L-cysteine = (sulfur carrier)-SH + L-alanine. The enzyme catalyses L-selenocysteine + AH2 = hydrogenselenide + L-alanine + A + H(+). Its pathway is cofactor biosynthesis; iron-sulfur cluster biosynthesis. Cysteine desulfurases mobilize the sulfur from L-cysteine to yield L-alanine, an essential step in sulfur metabolism for biosynthesis of a variety of sulfur-containing biomolecules. Component of the suf operon, which is activated and required under specific conditions such as oxidative stress and iron limitation. Acts as a potent selenocysteine lyase in vitro, that mobilizes selenium from L-selenocysteine. Selenocysteine lyase activity is however unsure in vivo. This is Cysteine desulfurase from Cronobacter sakazakii (strain ATCC BAA-894) (Enterobacter sakazakii).